A 136-amino-acid polypeptide reads, in one-letter code: Small ribosomal subunit protein uS19 (136 aa).

It belongs to the universal ribosomal protein uS19 family.

Protein S19 forms a complex with S13 that binds strongly to the 16S ribosomal RNA. This Methanosphaera stadtmanae (strain ATCC 43021 / DSM 3091 / JCM 11832 / MCB-3) protein is Small ribosomal subunit protein uS19.